A 511-amino-acid polypeptide reads, in one-letter code: Glucose-6-phosphate 1-dehydrogenase, cytoplasmic isoform (511 aa).

Residues 36 to 43 (GASGDLAK), arginine 71, tyrosine 151, and lysine 178 contribute to the NADP(+) site. Residues lysine 178, 208–212 (HYLGK), glutamate 246, and aspartate 265 each bind D-glucose 6-phosphate. The active-site Proton acceptor is the histidine 270. Position 353 (lysine 353) interacts with NADP(+). The D-glucose 6-phosphate site is built by lysine 356 and arginine 361. NADP(+)-binding residues include lysine 362, arginine 366, and arginine 390. Residue glutamine 392 coordinates D-glucose 6-phosphate. Residues 398–400 (YMK), 418–420 (DLS), arginine 484, and tryptophan 506 contribute to the NADP(+) site.

The protein belongs to the glucose-6-phosphate dehydrogenase family. As to quaternary structure, homotetramer. As to expression, found in tubers, stolons, roots, and flower buds.

The protein localises to the cytoplasm. It carries out the reaction D-glucose 6-phosphate + NADP(+) = 6-phospho-D-glucono-1,5-lactone + NADPH + H(+). Its pathway is carbohydrate degradation; pentose phosphate pathway; D-ribulose 5-phosphate from D-glucose 6-phosphate (oxidative stage): step 1/3. Its activity is regulated as follows. Regulated by metabolites. In terms of biological role, catalyzes the rate-limiting step of the oxidative pentose-phosphate pathway, which represents a route for the dissimilation of carbohydrates besides glycolysis. The main function of this enzyme is to generate NADPH for reductive biosyntheses. This is Glucose-6-phosphate 1-dehydrogenase, cytoplasmic isoform (G6PDH) from Solanum tuberosum (Potato).